The chain runs to 402 residues: MRCPILLADMNSFYASVHQAMEPRLKGKPVIVGGDPARRHGIVLAASVEAKACGVKTGMTVREAAALCPQGIFLKPRHSHYINFSARIIRIMKDFSPLVEPFSIDEAFMDVSGCGLLFGSSLEIAVKLKARIKNEVGVLCSVGVGPNKLLAKMAAGMQKPDGLTLLDFPDVPVKIWPLPVRELFGVGSRLEKRLRDLNIHTIGDLARYPLQVLKQKFGLVGHILHLSASGIDYSPVDPCSLERVRSIGHQITLPRDYWGYNEIKVVILELCEIVCRRVRLGGYAGRTVSLTLKDTDFLWLSRARTMNYPTASADEVYRVAVQLLHQHWPPWKPVRMVGVSLAGLVKNRAEQLDLFGEAERARRLHAACDRIKDRFGEHSILRAVSLTPAGVLRERGGEAKHG.

The region spanning 5 to 187 (ILLADMNSFY…LPVRELFGVG (183 aa)) is the UmuC domain. D9 and D105 together coordinate Mg(2+). Residue E106 is part of the active site.

This sequence belongs to the DNA polymerase type-Y family. In terms of assembly, monomer. Mg(2+) serves as cofactor.

The protein resides in the cytoplasm. The enzyme catalyses DNA(n) + a 2'-deoxyribonucleoside 5'-triphosphate = DNA(n+1) + diphosphate. Its function is as follows. Poorly processive, error-prone DNA polymerase involved in untargeted mutagenesis. Copies undamaged DNA at stalled replication forks, which arise in vivo from mismatched or misaligned primer ends. These misaligned primers can be extended by PolIV. Exhibits no 3'-5' exonuclease (proofreading) activity. May be involved in translesional synthesis, in conjunction with the beta clamp from PolIII. This Pelotomaculum thermopropionicum (strain DSM 13744 / JCM 10971 / SI) protein is DNA polymerase IV.